A 240-amino-acid polypeptide reads, in one-letter code: Agamous-like MADS-box protein AGL16 (240 aa).

The MADS-box domain occupies 1–61; it reads MGRGKIAIKR…GRLYDFSSSS (61 aa). One can recognise a K-box domain in the interval 86 to 176; the sequence is IQFWQKEAAI…HKKVNLMHQQ (91 aa).

As to quaternary structure, homodimer. Interacts with AGL15, AGL24, AP1, AGL6, AG, AGL1, AGL11, AGL5, SEP3, SEP1, AGL63, AGL14, SOC1 and AGL21. Interacts with AGL63. Interacts with SVP. As to expression, expressed at high levels in leaves, moderate levels in roots, seedlings and stems, and at low levels in flowers, pollen and siliques. Accumulates in leaf guard cells and trichomes. Also present in epidermal cells of roots. Expressed in mature guard cells.

It localises to the nucleus. Probable transcription factor involved in the regulation of flowering time in long-day photoperiod. Participates in the repression of FT expression and floral transition, by interacting closely with the FLC-SVP pathways. Functions in the satellite meristemoid lineage of stomatal development. This Arabidopsis thaliana (Mouse-ear cress) protein is Agamous-like MADS-box protein AGL16 (AGL16).